Reading from the N-terminus, the 98-residue chain is NADH-ubiquinone oxidoreductase chain 4L (98 aa).

3 helical membrane-spanning segments follow: residues 2-22, 29-49, and 61-81; these read PSIS…MLVF, SLLC…LFIM, and ILLL…LVMV.

Belongs to the complex I subunit 4L family. Core subunit of respiratory chain NADH dehydrogenase (Complex I) which is composed of 45 different subunits.

It is found in the mitochondrion inner membrane. It carries out the reaction a ubiquinone + NADH + 5 H(+)(in) = a ubiquinol + NAD(+) + 4 H(+)(out). Its function is as follows. Core subunit of the mitochondrial membrane respiratory chain NADH dehydrogenase (Complex I) which catalyzes electron transfer from NADH through the respiratory chain, using ubiquinone as an electron acceptor. Part of the enzyme membrane arm which is embedded in the lipid bilayer and involved in proton translocation. The chain is NADH-ubiquinone oxidoreductase chain 4L (MT-ND4L) from Lepilemur mitsinjoensis (Mitsinjo sportive lemur).